Reading from the N-terminus, the 212-residue chain is Uracil phosphoribosyltransferase (212 aa).

5-phospho-alpha-D-ribose 1-diphosphate-binding positions include Arg-78, Arg-103, and 130–138; that span reads DPMLATGGS. Uracil is bound by residues Ile-193 and 198–200; that span reads GDA. Position 199 (Asp-199) interacts with 5-phospho-alpha-D-ribose 1-diphosphate.

This sequence belongs to the UPRTase family. Requires Mg(2+) as cofactor.

It carries out the reaction UMP + diphosphate = 5-phospho-alpha-D-ribose 1-diphosphate + uracil. Its pathway is pyrimidine metabolism; UMP biosynthesis via salvage pathway; UMP from uracil: step 1/1. Allosterically activated by GTP. Catalyzes the conversion of uracil and 5-phospho-alpha-D-ribose 1-diphosphate (PRPP) to UMP and diphosphate. The protein is Uracil phosphoribosyltransferase of Pseudomonas putida (strain ATCC 700007 / DSM 6899 / JCM 31910 / BCRC 17059 / LMG 24140 / F1).